The sequence spans 285 residues: MAAKMATMVALVFGLALLLSAAAPAAAQNCGCQDGYCCSQWGYCGTTEAYCGQGCQSGPCWGSGGEAAAGMAGRKAGAGAGVSVESVVTEAFFNGIKNQAPNGCAGKSFYTRQSFLNAARSYSGFANDRTNDDSKREIAAFFAHVTHETGHMCYINEINGANMDYCDKSNKQWPCQPGKKYYGRGPLQISWNFNYGPAGKNIGFDGLRDPDKVAQDPTISFKTALWFWMNNVHQVMSQGFGATIRAINGALECNGKNPGAVNARVNYYKDYCRQFGVSPGGNLYC.

The first 27 residues, 1-27 (MAAKMATMVALVFGLALLLSAAAPAAA), serve as a signal peptide directing secretion. Residues 28–62 (QNCGCQDGYCCSQWGYCGTTEAYCGQGCQSGPCWG) form the Chitin-binding type-1 domain. Cystine bridges form between Cys-30–Cys-38, Cys-32–Cys-44, Cys-37–Cys-51, Cys-55–Cys-60, Cys-104–Cys-153, Cys-166–Cys-175, and Cys-253–Cys-285. Glu-148 serves as the catalytic Proton donor.

This sequence belongs to the glycosyl hydrolase 19 family. Chitinase class IV subfamily. As to expression, expressed at low levels in leaves, sheaths and meristems.

It catalyses the reaction Random endo-hydrolysis of N-acetyl-beta-D-glucosaminide (1-&gt;4)-beta-linkages in chitin and chitodextrins.. In terms of biological role, hydrolyzes chitin and may function in reproductive organs during embryogenesis and seed maturation. The polypeptide is Chitinase 4 (Cht4) (Oryza sativa subsp. japonica (Rice)).